The primary structure comprises 706 residues: Elongation factor G (706 aa).

The region spanning 8–290 is the tr-type G domain; sequence NRYRNIGICA…AVIDYLPAPT (283 aa). Residues 17–24, 88–92, and 142–145 contribute to the GTP site; these read AHVDAGKT, DTPGH, and NKMD.

This sequence belongs to the TRAFAC class translation factor GTPase superfamily. Classic translation factor GTPase family. EF-G/EF-2 subfamily.

The protein resides in the cytoplasm. Functionally, catalyzes the GTP-dependent ribosomal translocation step during translation elongation. During this step, the ribosome changes from the pre-translocational (PRE) to the post-translocational (POST) state as the newly formed A-site-bound peptidyl-tRNA and P-site-bound deacylated tRNA move to the P and E sites, respectively. Catalyzes the coordinated movement of the two tRNA molecules, the mRNA and conformational changes in the ribosome. The sequence is that of Elongation factor G from Stutzerimonas stutzeri (strain A1501) (Pseudomonas stutzeri).